A 305-amino-acid polypeptide reads, in one-letter code: Olfactory receptor 9G9 (305 aa).

Residues Met-1 to Phe-27 lie on the Extracellular side of the membrane. An N-linked (GlcNAc...) asparagine glycan is attached at Asn-5. Residues Val-28–Ile-48 form a helical membrane-spanning segment. Topologically, residues Cys-49–Asn-64 are cytoplasmic. The chain crosses the membrane as a helical span at residues Leu-65–Ile-85. At Ser-86 to Cys-96 the chain is on the extracellular side. Cys-96 and Cys-178 are oxidised to a cystine. Residues Leu-97–Met-117 form a helical membrane-spanning segment. Topologically, residues Ala-118 to Lys-138 are cytoplasmic. The chain crosses the membrane as a helical span at residues Leu-139–Thr-159. The Extracellular segment spans residues Lys-160–Phe-200. A helical membrane pass occupies residues Leu-201–Ile-221. At Thr-222–Thr-239 the chain is on the cytoplasmic side. A helical membrane pass occupies residues Cys-240 to Leu-260. The Extracellular segment spans residues Pro-261–Lys-271. Residues Ile-272–Leu-291 traverse the membrane as a helical segment. Residues Arg-292–Pro-305 are Cytoplasmic-facing.

The protein belongs to the G-protein coupled receptor 1 family.

The protein resides in the cell membrane. Odorant receptor. This Homo sapiens (Human) protein is Olfactory receptor 9G9 (OR9G9).